Reading from the N-terminus, the 313-residue chain is Porphobilinogen deaminase (313 aa).

Residue C243 is modified to S-(dipyrrolylmethanemethyl)cysteine.

This sequence belongs to the HMBS family. In terms of assembly, monomer. It depends on dipyrromethane as a cofactor.

It catalyses the reaction 4 porphobilinogen + H2O = hydroxymethylbilane + 4 NH4(+). Its pathway is porphyrin-containing compound metabolism; protoporphyrin-IX biosynthesis; coproporphyrinogen-III from 5-aminolevulinate: step 2/4. Functionally, tetrapolymerization of the monopyrrole PBG into the hydroxymethylbilane pre-uroporphyrinogen in several discrete steps. The chain is Porphobilinogen deaminase from Bordetella petrii (strain ATCC BAA-461 / DSM 12804 / CCUG 43448).